A 531-amino-acid chain; its full sequence is T-complex protein 1 subunit zeta (531 aa).

Position 2 is an N-acetylalanine (alanine 2). Lysine 5 carries the N6-acetyllysine modification. Glycine 39 lines the ADP pocket. Glycine 39 contacts ATP. Residue aspartate 90 participates in Mg(2+) binding. Glycine 91, threonine 92, threonine 93, serine 94, threonine 158, and lysine 159 together coordinate ADP. ATP is bound by residues glycine 91, threonine 92, and threonine 93. N6-acetyllysine is present on lysine 199. The residue at position 205 (serine 205) is a Phosphoserine. Lysine 251 is covalently cross-linked (Glycyl lysine isopeptide (Lys-Gly) (interchain with G-Cter in SUMO2)). Residues lysine 287, lysine 365, lysine 377, and lysine 388 each carry the N6-acetyllysine modification. Alanine 411 is an ADP binding site. ATP is bound by residues alanine 411, glycine 412, aspartate 496, and lysine 501. Aspartate 496 lines the ADP pocket.

The protein belongs to the TCP-1 chaperonin family. As to quaternary structure, component of the chaperonin-containing T-complex (TRiC), a hexadecamer composed of two identical back-to-back stacked rings enclosing a protein folding chamber. Each ring is made up of eight different subunits: TCP1/CCT1, CCT2, CCT3, CCT4, CCT5, CCT6A/CCT6, CCT7, CCT8. Interacts with PACRG.

It is found in the cytoplasm. The catalysed reaction is ATP + H2O = ADP + phosphate + H(+). Its function is as follows. Component of the chaperonin-containing T-complex (TRiC), a molecular chaperone complex that assists the folding of actin, tubulin and other proteins upon ATP hydrolysis. The TRiC complex mediates the folding of WRAP53/TCAB1, thereby regulating telomere maintenance. This chain is T-complex protein 1 subunit zeta (CCT6), found in Oryctolagus cuniculus (Rabbit).